The primary structure comprises 121 residues: Basic phospholipase A2 F17 (121 aa).

7 disulfide bridges follow: cysteine 25–cysteine 114, cysteine 27–cysteine 43, cysteine 42–cysteine 94, cysteine 48–cysteine 121, cysteine 49–cysteine 87, cysteine 56–cysteine 80, and cysteine 74–cysteine 85. Ca(2+) is bound by residues tyrosine 26, glycine 28, and glycine 30. The active site involves histidine 46. Aspartate 47 contacts Ca(2+). Aspartate 88 is an active-site residue.

The protein belongs to the phospholipase A2 family. Group II subfamily. D49 sub-subfamily. In terms of assembly, when this protein is associated with crotapotin (F5 or F7), it forms the crotoxin protein. Ca(2+) is required as a cofactor. As to expression, expressed by the venom gland.

Its subcellular location is the secreted. The catalysed reaction is a 1,2-diacyl-sn-glycero-3-phosphocholine + H2O = a 1-acyl-sn-glycero-3-phosphocholine + a fatty acid + H(+). Its activity is regulated as follows. Activated by heparin. Inhibited by its chaperone crotapotin. In terms of biological role, snake venom phospholipase A2 (PLA2) that has anticoagulant activity and inhibits bactericial growth of the Gram-negative bacteria Xanthomonas axonopodis pv. passiflorae (in monomeric form). PLA2 catalyzes the calcium-dependent hydrolysis of the 2-acyl groups in 3-sn-phosphoglycerides. This Crotalus durissus terrificus (South American rattlesnake) protein is Basic phospholipase A2 F17.